A 207-amino-acid chain; its full sequence is ATP-dependent Clp protease proteolytic subunit (207 aa).

The active-site Nucleophile is the S111. H136 is an active-site residue.

The protein belongs to the peptidase S14 family. In terms of assembly, fourteen ClpP subunits assemble into 2 heptameric rings which stack back to back to give a disk-like structure with a central cavity, resembling the structure of eukaryotic proteasomes.

Its subcellular location is the cytoplasm. The enzyme catalyses Hydrolysis of proteins to small peptides in the presence of ATP and magnesium. alpha-casein is the usual test substrate. In the absence of ATP, only oligopeptides shorter than five residues are hydrolyzed (such as succinyl-Leu-Tyr-|-NHMec, and Leu-Tyr-Leu-|-Tyr-Trp, in which cleavage of the -Tyr-|-Leu- and -Tyr-|-Trp bonds also occurs).. Functionally, cleaves peptides in various proteins in a process that requires ATP hydrolysis. Has a chymotrypsin-like activity. Plays a major role in the degradation of misfolded proteins. In Yersinia pseudotuberculosis serotype O:1b (strain IP 31758), this protein is ATP-dependent Clp protease proteolytic subunit.